Here is a 120-residue protein sequence, read N- to C-terminus: Chaperonin GroEL (120 aa).

23–27 (DGTTT) contributes to the ATP binding site.

This sequence belongs to the chaperonin (HSP60) family. As to quaternary structure, forms a cylinder of 14 subunits composed of two heptameric rings stacked back-to-back. Interacts with the co-chaperonin GroES.

Its subcellular location is the cytoplasm. The enzyme catalyses ATP + H2O + a folded polypeptide = ADP + phosphate + an unfolded polypeptide.. In terms of biological role, together with its co-chaperonin GroES, plays an essential role in assisting protein folding. The GroEL-GroES system forms a nano-cage that allows encapsulation of the non-native substrate proteins and provides a physical environment optimized to promote and accelerate protein folding. The polypeptide is Chaperonin GroEL (Mycobacterium shimoidei).